The following is a 368-amino-acid chain: Glutamate 5-kinase (368 aa).

K13 contributes to the ATP binding site. Substrate-binding residues include S54, D141, and N153. Residue S173 to D174 coordinates ATP. The 78-residue stretch at R278–P355 folds into the PUA domain.

The protein belongs to the glutamate 5-kinase family.

It is found in the cytoplasm. It catalyses the reaction L-glutamate + ATP = L-glutamyl 5-phosphate + ADP. The protein operates within amino-acid biosynthesis; L-proline biosynthesis; L-glutamate 5-semialdehyde from L-glutamate: step 1/2. In terms of biological role, catalyzes the transfer of a phosphate group to glutamate to form L-glutamate 5-phosphate. The polypeptide is Glutamate 5-kinase (Dinoroseobacter shibae (strain DSM 16493 / NCIMB 14021 / DFL 12)).